The chain runs to 273 residues: Tryptophan synthase alpha chain (273 aa).

Residues E49 and D60 each act as proton acceptor in the active site.

Belongs to the TrpA family. As to quaternary structure, tetramer of two alpha and two beta chains.

It catalyses the reaction (1S,2R)-1-C-(indol-3-yl)glycerol 3-phosphate + L-serine = D-glyceraldehyde 3-phosphate + L-tryptophan + H2O. It functions in the pathway amino-acid biosynthesis; L-tryptophan biosynthesis; L-tryptophan from chorismate: step 5/5. In terms of biological role, the alpha subunit is responsible for the aldol cleavage of indoleglycerol phosphate to indole and glyceraldehyde 3-phosphate. The sequence is that of Tryptophan synthase alpha chain from Halorhodospira halophila (strain DSM 244 / SL1) (Ectothiorhodospira halophila (strain DSM 244 / SL1)).